The primary structure comprises 215 residues: Pyrrolidone-carboxylate peptidase (215 aa).

Active-site residues include E78, C141, and H165.

It belongs to the peptidase C15 family. In terms of assembly, homotetramer.

Its subcellular location is the cytoplasm. It carries out the reaction Release of an N-terminal pyroglutamyl group from a polypeptide, the second amino acid generally not being Pro.. Functionally, removes 5-oxoproline from various penultimate amino acid residues except L-proline. The protein is Pyrrolidone-carboxylate peptidase of Lactobacillus johnsonii (strain CNCM I-12250 / La1 / NCC 533).